We begin with the raw amino-acid sequence, 429 residues long: MDSALYHSAGIFGAPSASTGGSMIASSKPLAFSIERIMARTPEPKSIPFPNLFQAPVGKAEPKQSPAPLHCMIPLMPLACEPPHKLHINGLDHPDTFAYNANELLSIGLNYKNEQQDAAPAIGQYKLFRPRVVNQSSFHAMGAAVCYLNCGEGACPPHAGLVNLHPMASYLLNTPLHARQKSLFSSEKSKQGAVADRCPPGVSFKELSHSHLHHYMKESAHILSEKLFKNSAAKVNSGSPQTKPKVFTCEVCGKVFNAHYNLTRHMPVHTGARPFVCKVCGKGFRQASTLCRHKIIHTQEKPHKCNQCGKAFNRSSTLNTHTRIHAGYKPFICEFCGKGFHQKGNYKNHKLTHSGEKQFKCNICNKAFHQVYNLTFHMHTHNDKKPFTCPTCGKGFCRNFDLKKHIRKLHDISPGPHSPPTPTGNTEGQ.

Residues 29 to 44 (PLAFSIERIMARTPEP) carry the Engrailed homology 1 repressor motif. C2H2-type zinc fingers lie at residues 247-269 (FTCE…MPVH), 275-297 (FVCK…KIIH), 303-325 (HKCN…TRIH), 331-353 (FICE…KLTH), 359-381 (FKCN…MHTH), and 387-410 (FTCP…RKLH). The disordered stretch occupies residues 409–429 (LHDISPGPHSPPTPTGNTEGQ).

This sequence belongs to the krueppel C2H2-type zinc-finger protein family.

It localises to the nucleus. Functionally, transcription repressor. Involved in the development of the forebrain region. This is Fez family zinc finger protein 1 (fezf1) from Danio rerio (Zebrafish).